A 128-amino-acid chain; its full sequence is NHP2-like protein 1 (128 aa).

Position 1 is an N-acetylmethionine (M1). T2 is subject to N-acetylthreonine; in NHP2-like protein 1, N-terminally processed. An N6-acetyllysine modification is found at K21. The tract at residues 36-48 (RKGANEATKTLNR) is interaction with U4 snRNA and U4atac snRNA. The interval 96–128 (SRPVIACSVTIKEGSQLKQQIQSIQQSIERLLV) is important for U4 snRNA-binding. S122 carries the post-translational modification Phosphoserine.

Belongs to the eukaryotic ribosomal protein eL8 family. Identified in the spliceosome B complex. Component of the U4/U6-U5 tri-snRNP complex composed of the U4, U6 and U5 snRNAs and at least PRPF3, PRPF4, PRPF6, PRPF8, PRPF31, SNRNP200, TXNL4A, WDR57, SNRNP40, DDX23, CD2BP2, PPIH, NHP2L1, EFTUD2, SART1 and USP39. Interacts with RAD17 and PRPF31. The complex formed by SNU13 and PRPF31 binds U4 snRNA. The complex formed by SNU13 and PRPF31 also binds U4atac snRNA, a characteristic component of specific, less abundant spliceosomal complexes. Part of the small subunit (SSU) processome, composed of more than 70 proteins and the RNA chaperone small nucleolar RNA (snoRNA) U3. Core component of box C/D small nucleolar ribonucleoprotein (snoRNP) particles; the core proteins SNU13, NOP56, NOP58 and FBL or FBLL1 assemble stepwise onto the snoRNA.

Its subcellular location is the nucleus. The protein localises to the nucleolus. In terms of biological role, part of the small subunit (SSU) processome, first precursor of the small eukaryotic ribosomal subunit. During the assembly of the SSU processome in the nucleolus, many ribosome biogenesis factors, an RNA chaperone and ribosomal proteins associate with the nascent pre-rRNA and work in concert to generate RNA folding, modifications, rearrangements and cleavage as well as targeted degradation of pre-ribosomal RNA by the RNA exosome. Involved in pre-mRNA splicing as component of the spliceosome. Binds to the 5'-stem-loop of U4 snRNA and thereby contributes to spliceosome assembly. The protein undergoes a conformational change upon RNA-binding. Core component of box C/D small nucleolar ribonucleoprotein (snoRNP) complexes that function in methylation of multiple sites on ribosomal RNAs (rRNAs) and messenger RNAs (mRNAs). The sequence is that of NHP2-like protein 1 from Bos taurus (Bovine).